The chain runs to 184 residues: Shikimate kinase (184 aa).

Gly15 to Ser20 lines the ATP pocket. Residue Thr19 coordinates Mg(2+). Asp37, Arg61, and Gly83 together coordinate substrate. ATP is bound at residue Arg123. Arg142 contacts substrate.

This sequence belongs to the shikimate kinase family. As to quaternary structure, monomer. Requires Mg(2+) as cofactor.

It localises to the cytoplasm. The enzyme catalyses shikimate + ATP = 3-phosphoshikimate + ADP + H(+). It functions in the pathway metabolic intermediate biosynthesis; chorismate biosynthesis; chorismate from D-erythrose 4-phosphate and phosphoenolpyruvate: step 5/7. In terms of biological role, catalyzes the specific phosphorylation of the 3-hydroxyl group of shikimic acid using ATP as a cosubstrate. This chain is Shikimate kinase, found in Coxiella burnetii (strain CbuK_Q154) (Coxiella burnetii (strain Q154)).